A 541-amino-acid polypeptide reads, in one-letter code: Zinc finger protein 513 (541 aa).

The tract at residues Met-1–Cys-120 is disordered. Positions Leu-44–Gly-55 are enriched in acidic residues. Phosphoserine occurs at positions 85 and 96. Residues Glu-103–Arg-115 show a composition bias toward basic and acidic residues. C2H2-type zinc fingers lie at residues Tyr-150–His-172, Phe-178–His-200, Tyr-206–His-228, Phe-360–His-382, Phe-388–His-410, Tyr-416–His-438, Phe-444–His-466, and Phe-472–His-494. The disordered stretch occupies residues Lys-492–Pro-541.

Belongs to the krueppel C2H2-type zinc-finger protein family. In terms of assembly, binds DNA. Can associate with the proximal promoter regions of PAX6 and SP4, and their known targets including ARR3, RHO, OPN1MW2 and OPN1SW.

It is found in the nucleus. Its function is as follows. Transcriptional regulator that plays a role in retinal development and maintenance. The protein is Zinc finger protein 513 (Znf513) of Rattus norvegicus (Rat).